We begin with the raw amino-acid sequence, 469 residues long: Phosphoglucosamine mutase (469 aa).

The active-site Phosphoserine intermediate is the Ser117. Positions 117, 263, 265, and 267 each coordinate Mg(2+). Ser117 carries the post-translational modification Phosphoserine.

The protein belongs to the phosphohexose mutase family. It depends on Mg(2+) as a cofactor. In terms of processing, activated by phosphorylation.

The enzyme catalyses alpha-D-glucosamine 1-phosphate = D-glucosamine 6-phosphate. Catalyzes the conversion of glucosamine-6-phosphate to glucosamine-1-phosphate. In Anaeromyxobacter sp. (strain Fw109-5), this protein is Phosphoglucosamine mutase.